A 146-amino-acid chain; its full sequence is UPF0310 protein YdcG (146 aa).

It belongs to the UPF0310 family.

This Bacillus subtilis (strain 168) protein is UPF0310 protein YdcG (ydcG).